The chain runs to 274 residues: ATP synthase subunit a (274 aa).

5 helical membrane-spanning segments follow: residues 43–63 (TLNI…LLVF), 103–123 (VIAP…MMDL), 149–169 (DVSI…FYSI), 223–243 (LIFI…LSVP), and 245–265 (AIFH…LTIV).

It belongs to the ATPase A chain family. In terms of assembly, F-type ATPases have 2 components, CF(1) - the catalytic core - and CF(0) - the membrane proton channel. CF(1) has five subunits: alpha(3), beta(3), gamma(1), delta(1), epsilon(1). CF(0) has three main subunits: a(1), b(2) and c(9-12). The alpha and beta chains form an alternating ring which encloses part of the gamma chain. CF(1) is attached to CF(0) by a central stalk formed by the gamma and epsilon chains, while a peripheral stalk is formed by the delta and b chains.

The protein localises to the cell inner membrane. Its function is as follows. Key component of the proton channel; it plays a direct role in the translocation of protons across the membrane. The protein is ATP synthase subunit a of Yersinia pestis bv. Antiqua (strain Angola).